A 361-amino-acid polypeptide reads, in one-letter code: Porphobilinogen deaminase (361 aa).

Serine 2 is subject to N-acetylserine. Serine 69 carries the phosphoserine modification. Lysine 74 carries the N6-acetyllysine modification. Serine 147 bears the Phosphoserine mark. Residue cysteine 261 is modified to S-(dipyrrolylmethanemethyl)cysteine.

It belongs to the HMBS family. In terms of assembly, monomer. Requires dipyrromethane as cofactor.

Its subcellular location is the cytoplasm. The protein localises to the cytosol. The enzyme catalyses 4 porphobilinogen + H2O = hydroxymethylbilane + 4 NH4(+). It participates in porphyrin-containing compound metabolism; protoporphyrin-IX biosynthesis; coproporphyrinogen-III from 5-aminolevulinate: step 2/4. Functionally, as part of the heme biosynthetic pathway, catalyzes the sequential polymerization of four molecules of porphobilinogen to form hydroxymethylbilane, also known as preuroporphyrinogen. Catalysis begins with the assembly of the dipyrromethane cofactor by the apoenzyme from two molecules of porphobilinogen or from preuroporphyrinogen. The covalently linked cofactor acts as a primer, around which the tetrapyrrole product is assembled. In the last step of catalysis, the product, preuroporphyrinogen, is released, leaving the cofactor bound to the holodeaminase intact. The protein is Porphobilinogen deaminase (HMBS) of Bos taurus (Bovine).